An 845-amino-acid chain; its full sequence is Envelope glycoprotein B (845 aa).

Positions 1–41 are cleaved as a signal peptide; that stretch reads MSFTDQTYTRSCMHTCITRDHRLYGIVIISLLLLLDNSVFC. Residues 42-727 are Virion surface-facing; it reads QNENKVIDIK…SGVASFLQNP (686 aa). 5 cysteine pairs are disulfide-bonded: cysteine 62/cysteine 523, cysteine 80/cysteine 479, cysteine 153/cysteine 218, cysteine 310/cysteine 358, and cysteine 552/cysteine 591. An involved in fusion and/or binding to host membrane region spans residues 120–126; the sequence is RYADVFS. Asparagine 175 carries an N-linked (GlcNAc...) asparagine; by host glycan. The segment at 204-212 is involved in fusion and/or binding to host membrane; that stretch reads LPGTWLRKT. Residues asparagine 328, asparagine 388, asparagine 414, asparagine 420, asparagine 425, asparagine 564, and asparagine 632 are each glycosylated (N-linked (GlcNAc...) asparagine; by host). Positions 677-725 are hydrophobic membrane proximal region; sequence LEQAIVTKPYVPPAGMQQALQGLSGVGSVITGTLGAMQSLVSGVASFLQ. The chain crosses the membrane as a helical span at residues 728-748; the sequence is FGGTLSIILIGCIIVGVIIIY. Topologically, residues 749–845 are intravirion; that stretch reads NRMNQSRGSP…GYTTLSSMNI (97 aa). An Internalization motif motif is present at residues 837 to 840; that stretch reads YTTL.

Belongs to the herpesviridae glycoprotein B family. In terms of assembly, homotrimer; disulfide-linked. Binds to heparan sulfate proteoglycans. Interacts with gH/gL heterodimer. A proteolytic cleavage by host furin generates two subunits that remain linked by disulfide bonds.

It localises to the virion membrane. Its subcellular location is the host cell membrane. It is found in the host endosome membrane. The protein localises to the host Golgi apparatus membrane. Its function is as follows. Envelope glycoprotein that forms spikes at the surface of virion envelope. Essential for the initial attachment to heparan sulfate moieties of the host cell surface proteoglycans. Involved in fusion of viral and cellular membranes leading to virus entry into the host cell. Following initial binding to its host receptors, membrane fusion is mediated by the fusion machinery composed at least of gB and the heterodimer gH/gL. May be involved in the fusion between the virion envelope and the outer nuclear membrane during virion egress. This chain is Envelope glycoprotein B, found in Elephas maximus (Indian elephant).